The primary structure comprises 474 residues: UDP-N-acetylmuramoylalanine--D-glutamate ligase (474 aa).

134 to 140 provides a ligand contact to ATP; it reads GSNGKST.

It belongs to the MurCDEF family.

The protein localises to the cytoplasm. It carries out the reaction UDP-N-acetyl-alpha-D-muramoyl-L-alanine + D-glutamate + ATP = UDP-N-acetyl-alpha-D-muramoyl-L-alanyl-D-glutamate + ADP + phosphate + H(+). It functions in the pathway cell wall biogenesis; peptidoglycan biosynthesis. Functionally, cell wall formation. Catalyzes the addition of glutamate to the nucleotide precursor UDP-N-acetylmuramoyl-L-alanine (UMA). This chain is UDP-N-acetylmuramoylalanine--D-glutamate ligase, found in Thiobacillus denitrificans (strain ATCC 25259 / T1).